Consider the following 391-residue polypeptide: Elongation factor Tu (391 aa).

The tr-type G domain occupies 10 to 201; the sequence is KPHVNIGTVG…AVDEYIPTPE (192 aa). The interval 19-26 is G1; it reads GHVDHGKT. 19–26 lines the GTP pocket; that stretch reads GHVDHGKT. Thr26 lines the Mg(2+) pocket. The segment at 55–59 is G2; that stretch reads GITIS. The interval 76 to 79 is G3; the sequence is DCPG. GTP-binding positions include 76-80 and 131-134; these read DCPGH and NKVD. A G4 region spans residues 131-134; sequence NKVD. A G5 region spans residues 169–171; the sequence is SAL.

The protein belongs to the TRAFAC class translation factor GTPase superfamily. Classic translation factor GTPase family. EF-Tu/EF-1A subfamily. In terms of assembly, monomer.

It is found in the cytoplasm. The enzyme catalyses GTP + H2O = GDP + phosphate + H(+). In terms of biological role, GTP hydrolase that promotes the GTP-dependent binding of aminoacyl-tRNA to the A-site of ribosomes during protein biosynthesis. The sequence is that of Elongation factor Tu from Ruegeria sp. (strain TM1040) (Silicibacter sp.).